A 79-amino-acid chain; its full sequence is uncharacterized protein (79 aa).

This is an uncharacterized protein from Methanocaldococcus jannaschii (strain ATCC 43067 / DSM 2661 / JAL-1 / JCM 10045 / NBRC 100440) (Methanococcus jannaschii).